The chain runs to 120 residues: Large ribosomal subunit protein uL18 (120 aa).

This sequence belongs to the universal ribosomal protein uL18 family. Part of the 50S ribosomal subunit; part of the 5S rRNA/L5/L18/L25 subcomplex. Contacts the 5S and 23S rRNAs.

This is one of the proteins that bind and probably mediate the attachment of the 5S RNA into the large ribosomal subunit, where it forms part of the central protuberance. This chain is Large ribosomal subunit protein uL18, found in Bacillus cereus (strain G9842).